Here is a 471-residue protein sequence, read N- to C-terminus: Alpha-galactosidase (471 aa).

Residues 1–18 form the signal peptide; sequence MFLLYLFTSFAAVSGVLG. Cysteines 42 and 74 form a disulfide. Residues Asp72 and Asp73 each contribute to the substrate site. Asn82 carries an N-linked (GlcNAc...) asparagine glycan. Cys121 and Cys151 are disulfide-bonded. A substrate-binding site is contributed by Lys147. The active-site Nucleophile is Asp149. Asn175 is a glycosylation site (N-linked (GlcNAc...) asparagine). Arg205 is a binding site for substrate. The active-site Proton donor is Asp209. 2 cysteine pairs are disulfide-bonded: Cys221–Cys237 and Cys223–Cys230. Substrate is bound at residue Gln251. N-linked (GlcNAc...) asparagine glycans are attached at residues Asn270, Asn403, Asn412, Asn417, Asn422, Asn435, and Asn454.

It belongs to the glycosyl hydrolase 27 family. In terms of assembly, homotetramer.

It is found in the secreted. It catalyses the reaction Hydrolysis of terminal, non-reducing alpha-D-galactose residues in alpha-D-galactosides, including galactose oligosaccharides, galactomannans and galactolipids.. This Saccharomyces pastorianus (strain ATCC 76529 / Carlsberg bottom yeast no.1 / CBS 1513 / CLIB 176 / NBRC 1167 / NCYC 396 / NRRL Y-12693) (Saaz-type lager yeast) protein is Alpha-galactosidase (MEL).